Reading from the N-terminus, the 200-residue chain is Pyridoxal 5'-phosphate synthase subunit PdxT (200 aa).

52–54 (GES) is a binding site for L-glutamine. C84 functions as the Nucleophile in the catalytic mechanism. Residues R116 and 145–146 (IR) contribute to the L-glutamine site. Active-site charge relay system residues include H181 and E183.

The protein belongs to the glutaminase PdxT/SNO family. In terms of assembly, in the presence of PdxS, forms a dodecamer of heterodimers. Only shows activity in the heterodimer.

It catalyses the reaction aldehydo-D-ribose 5-phosphate + D-glyceraldehyde 3-phosphate + L-glutamine = pyridoxal 5'-phosphate + L-glutamate + phosphate + 3 H2O + H(+). The enzyme catalyses L-glutamine + H2O = L-glutamate + NH4(+). It functions in the pathway cofactor biosynthesis; pyridoxal 5'-phosphate biosynthesis. Catalyzes the hydrolysis of glutamine to glutamate and ammonia as part of the biosynthesis of pyridoxal 5'-phosphate. The resulting ammonia molecule is channeled to the active site of PdxS. The polypeptide is Pyridoxal 5'-phosphate synthase subunit PdxT (Saccharolobus solfataricus (strain ATCC 35092 / DSM 1617 / JCM 11322 / P2) (Sulfolobus solfataricus)).